The chain runs to 228 residues: LOB domain-containing protein 30 (228 aa).

The 103-residue stretch at 16–118 (GPCGACKFLR…TELSYLQAHL (103 aa)) folds into the LOB domain. Residues 188-228 (SNMGGGGELQALAREFIHGGQMPAQPSPGTSGSASSVIKRE) are disordered. Over residues 214-228 (SPGTSGSASSVIKRE) the composition is skewed to polar residues.

This sequence belongs to the LOB domain-containing protein family. As to expression, expressed in roots, stems, leaves and flowers. Expressed in vascular tissues of hypocotyls, leaves, roots, developing floral organs and siliques.

Its function is as follows. Involved in the positive regulation of tracheary element (TE) differentiation. Involved in a positive feedback loop that maintains or promotes NAC030/VND7 expression that regulates TE differentiation-related genes. In Arabidopsis thaliana (Mouse-ear cress), this protein is LOB domain-containing protein 30 (LBD30).